Here is a 252-residue protein sequence, read N- to C-terminus: Adenosylcobinamide-GDP ribazoletransferase (252 aa).

A run of 7 helical transmembrane segments spans residues 34–54 (GASFMPLVGVIVGGIQWIIYK), 55–75 (LCIIIFSLNVSIVIVILAGIV), 113–133 (YACLAIIIDILLKYSFFCSIV), 138–158 (LIIIIAPVMSRFSIVFIAFIG), 174–194 (IGKWQLFWAAFITVITLFFLM), 198–218 (FIYVIILIFAGLFMSFLFNVF), and 230–250 (LLGANNEIVEILTMVMLCVII).

The protein belongs to the CobS family. Mg(2+) is required as a cofactor.

The protein localises to the cell membrane. It catalyses the reaction alpha-ribazole + adenosylcob(III)inamide-GDP = adenosylcob(III)alamin + GMP + H(+). The catalysed reaction is alpha-ribazole 5'-phosphate + adenosylcob(III)inamide-GDP = adenosylcob(III)alamin 5'-phosphate + GMP + H(+). It participates in cofactor biosynthesis; adenosylcobalamin biosynthesis; adenosylcobalamin from cob(II)yrinate a,c-diamide: step 7/7. Functionally, joins adenosylcobinamide-GDP and alpha-ribazole to generate adenosylcobalamin (Ado-cobalamin). Also synthesizes adenosylcobalamin 5'-phosphate from adenosylcobinamide-GDP and alpha-ribazole 5'-phosphate. The chain is Adenosylcobinamide-GDP ribazoletransferase from Clostridium kluyveri (strain NBRC 12016).